The primary structure comprises 883 residues: Pre-mRNA-splicing factor syf1 homolog (883 aa).

HAT repeat units follow at residues 13–45 (INFEVEDVPYEEEILRNAYSVKHWLRYIDHKAK), 46–78 (APNNGVNMVYERALKELPGSYKIWHNYLRTRRK), 88–120 (PMYEEVNSAFERALVFMHKMPRIWMDYGAFMTS), 122–156 (CKITRTRHVFDRALRALPITQHGRIWPLYLQFVRR), 158–190 (EMPETALRVYRRYLKLFPEDTEEYVDYLQEADR), 268–303 (GLFDRARDIYEEAIQTVTTVRDFTQVFDEYAQFEEL), 368–406 (DKPAEIISTYTEAVQTVQPKQAVGKLHTLWVEFAKFYEA), 463–495 (KRKIAYYDDTETVQARLHRSLKVWSMYADLEES), 531–565 (NYFEEAYRAYEKGISLFKWPNVYDIWNSYLTKFLE), 570–604 (TKLERARDLFEQCLDQCPPEHAKYFYLLYAKLEEE), 642–676 (YGLPRTREIYEKAIESLPEQNMRHMCVKFAELETK), and 678–712 (GEVDRARAIYAHCSQVCDPRITADFWQTWKEFEVR). Disordered regions lie at residues 794–851 (RGET…DEEG) and 864–883 (IPAKVFGSLKPSNQGDSDGE). Positions 812–834 (DEIDIGDSDEDDEEEDDDEENEM) are enriched in acidic residues. 2 stretches are compositionally biased toward polar residues: residues 835–844 (TNENQASAAV) and 873–883 (KPSNQGDSDGE).

It belongs to the crooked-neck family. As to quaternary structure, component of the NTC(Nineteen)/Prp19 complex composed of at least fand, Prp19,CG9667/ISY1 and Cdc5/CDC5L. Within the complex, interacts with Prp19 and ISY1/CG9667.

The protein resides in the nucleus. Its function is as follows. Subunit of the NTC(Nineteen)/Prp19 complex, which is part of the spliceosome. The complex participates in spliceosome assembly, its remodeling and is required for efficient spliceosome activation. Essential for efficient pre-mRNA splicing. In embryos, efficient pre-mRNA splicing of zygotic transcripts is essential during dynamic cellular processes that require rapid division and/or dramatic changes in gene expression such as blastoderm cellularization, tracheal branching morphogenesis, Malpighian morphogenesis and epidermal development. Part of its role in promoting embryo tracheal development is also due to specifically splicing bnl transcripts which results in the activation of the BNL-FGF pathway. The sequence is that of Pre-mRNA-splicing factor syf1 homolog from Drosophila melanogaster (Fruit fly).